The following is a 541-amino-acid chain: Reticulophagy regulator 2 (541 aa).

3 helical membrane-spanning segments follow: residues 75-91 (LHSLVTAATLNGLFWLL), 99-115 (FFLLSISLLTYFLLDLW), and 199-219 (VPGIMISYIVLLSILLWPLVV). A disordered region spans residues 249–282 (LHHKHDKRKRQGKNAPPAGDEPLAETESESEAEL). Residues 250–260 (HHKHDKRKRQG) are compositionally biased toward basic residues. Over residues 270–280 (PLAETESESEA) the composition is skewed to acidic residues. Phosphothreonine is present on threonine 274. Serine 276, serine 278, serine 286, and serine 306 each carry phosphoserine. Threonine 329 bears the Phosphothreonine mark. Disordered regions lie at residues 331-389 (VSED…ADKE), 403-440 (THFNGAGSPQEGVKCPPGGPVETLSPEAVSGDLMAPSS), and 459-481 (PSVLPSLPQDSPQALTAPEEEEA). Phosphoserine occurs at positions 332, 339, and 342. Residues 459–475 (PSVLPSLPQDSPQALTA) show a composition bias toward low complexity. An LIR motif motif is present at residues 485–490 (EDFELL). The tract at residues 496–541 (EQLNAELGLGPEMPPKPPDVLPPPPLGPDSHSLVQSDQEAHAVVEP) is disordered. Positions 507–522 (EMPPKPPDVLPPPPLG) are enriched in pro residues.

It belongs to the RETREG family. In terms of assembly, interacts with ATG8 family modifier proteins MAP1LC3A, MAP1LC3B, GABARAP, GABARAPL1 and GABARAPL2. Interacts with CANX.

It is found in the endoplasmic reticulum membrane. In terms of biological role, endoplasmic reticulum (ER)-anchored autophagy regulator which exists in an inactive state under basal conditions but is activated following cellular stress. When activated, induces ER fragmentation and mediates ER delivery into lysosomes through sequestration into autophagosomes via interaction with ATG8 family proteins. Required for collagen quality control in a LIR motif-independent manner. In Rattus norvegicus (Rat), this protein is Reticulophagy regulator 2 (Retreg2).